A 447-amino-acid polypeptide reads, in one-letter code: ATP-dependent protease ATPase subunit HslU (447 aa).

ATP contacts are provided by residues Ile18, 60 to 65, Asp259, Glu325, and Arg397; that span reads GVGKTE.

This sequence belongs to the ClpX chaperone family. HslU subfamily. A double ring-shaped homohexamer of HslV is capped on each side by a ring-shaped HslU homohexamer. The assembly of the HslU/HslV complex is dependent on binding of ATP.

The protein localises to the cytoplasm. In terms of biological role, ATPase subunit of a proteasome-like degradation complex; this subunit has chaperone activity. The binding of ATP and its subsequent hydrolysis by HslU are essential for unfolding of protein substrates subsequently hydrolyzed by HslV. HslU recognizes the N-terminal part of its protein substrates and unfolds these before they are guided to HslV for hydrolysis. The chain is ATP-dependent protease ATPase subunit HslU from Burkholderia ambifaria (strain ATCC BAA-244 / DSM 16087 / CCUG 44356 / LMG 19182 / AMMD) (Burkholderia cepacia (strain AMMD)).